The sequence spans 1079 residues: Electrogenic sodium bicarbonate cotransporter 1 (1079 aa).

Residues 1 to 62 (MEDEAVLDRG…EKKEKERISE (62 aa)) form a required for interaction with AHCYL1 region. At 1-466 (MEDEAVLDRG…FASDFYDALN (466 aa)) the chain is on the cytoplasmic side. Glu2 is modified (phosphoserine). The residue at position 30 (Tyr30) is a Phosphotyrosine. The span at 39-52 (YRRRRRHKRKAGHK) shows a compositional bias: basic residues. The disordered stretch occupies residues 39 to 78 (YRRRRRHKRKAGHKEKKEKERISENYSDKSDVENADESSS). A compositionally biased stretch (basic and acidic residues) spans 53–70 (EKKEKERISENYSDKSDV). Phosphoserine occurs at positions 61, 65, 68, 223, 232, 233, and 245. The tract at residues 235 to 266 (SRMFSNPDNGSPAMTHRNLTSSSLNDISDKPE) is disordered. Thr249 and Thr254 each carry phosphothreonine. Polar residues predominate over residues 251 to 260 (RNLTSSSLND). A phosphoserine mark is found at Ser256, Ser257, and Ser262. The helical transmembrane segment at 467 to 491 (IQALSAILFIYLATVTNAITFGGLL) threads the bilayer. Over 492–501 (GDATDNMQGV) the chain is Extracellular. A helical transmembrane segment spans residues 502–520 (LESFLGTAVSGAIFCLFAG). Residue Gln521 is a topological domain, cytoplasmic. The discontinuously helical transmembrane segment at 522–542 (PLTILSSTGPVLVFERLLFNF) threads the bilayer. Residues 543–550 (SKDHSFDY) are Extracellular-facing. A helical transmembrane segment spans residues 551–571 (LEFRLWIGLWSAFMCLILVAT). The Cytoplasmic portion of the chain corresponds to 572–585 (DASFLVQYFTRFTE). A helical transmembrane segment spans residues 586–609 (EGFSSLISFIFIYDAFKKMIKLAD). Ile597 and Phe617 each carry an N-linked (GlcNAc) asparagine glycan. The Extracellular segment spans residues 610-692 (YYPINSDFRV…GNNCDFVPDI (83 aa)). A helical membrane pass occupies residues 693–710 (TLMSFILFLGTYTSSMAM). The Cytoplasmic segment spans residues 711–725 (KKFKTSRYFPTTARK). Residues 726-745 (LISDFAIILSILIFCVIDAL) form a helical membrane-spanning segment. Residues 746 to 779 (VGVDTPKLIVPSEFKPTSPHRGWFVPPFGGNPWW) are Extracellular-facing. The interaction with CA4 stretch occupies residues 748-779 (VDTPKLIVPSEFKPTSPHRGWFVPPFGGNPWW). The chain crosses the membrane as a helical span at residues 780–807 (VCLAAAIPALLVTILIFMDQQITAVIVN). Topologically, residues 808 to 819 (RKEHKLKKGAGY) are cytoplasmic. The chain crosses the membrane as a helical span at residues 820-836 (HLDLFWVAILMVVCSFM). Position 837 (Ala837) is a topological domain, extracellular. The discontinuously helical transmembrane segment at 838-855 (LPWYVAATVISIAHIDSL) threads the bilayer. Residues 856 to 877 (KMETETSAPGEQPKFLGVREQR) are Cytoplasmic-facing. Residues 878–894 (VTGTLVFILTGLSVFMA) traverse the membrane as a helical segment. Topologically, residues 895-901 (PILKFIP) are extracellular. Residues 902-918 (MPVLYGVFLYMGVASLN) form a helical membrane-spanning segment. Residues 919-960 (GVQFMDRLKLLLMPLKHQPDFIYLRHVPLRRVHLFTSLQVLC) lie on the Cytoplasmic side of the membrane. Residues 961–986 (LALLWILKSTVAAIIFPVMILALVAV) constitute an intramembrane region (discontinuously helical). At 987–1079 (RKGMDYLFSQ…STFLERHTSC (93 aa)) the chain is on the cytoplasmic side. The interval 1002 to 1004 (LDD) is CA2-binding. A disordered region spans residues 1012–1079 (KKKEDEKKKK…STFLERHTSC (68 aa)). A phosphoserine mark is found at Ser1026 and Ser1029. Ser1026 is subject to Phosphoserine; by PKA. Positions 1030-1033 (DNDD) are CA2-binding. Phosphoserine occurs at positions 1034 and 1044. The interval 1057–1059 (FLS) is required for basolateral targeting. Phosphoserine is present on residues Asp1060, Leu1064, Ser1069, and Ser1078. The span at 1062–1079 (KPLDRERSSTFLERHTSC) shows a compositional bias: basic and acidic residues.

The protein belongs to the anion exchanger (TC 2.A.31) family. As to quaternary structure, homodimer. Interacts with CA2/carbonic anhydrase 2 and CA4/carbonic anhydrase 4 which may regulate transporter activity. Isoform 1 but not isoform 2 interacts with AHCYL1 (via PEST domain when phosphorylated); the interaction increases SLC4A4 isoform 1 activity. Interacts with AHCYL2. Post-translationally, phosphorylation of Ser-1026 by PKA increases the binding of CA2 and changes the Na(+):HCO3(-) stoichiometry of the transporter from 3:1 to 2:1. Phosphorylated in presence of STK39 and dephosphorylated in presence of PP1 phosphatase; phosphorylation seems to inhibit SLC4A4 activity. N-glycosylation is not necessary for the transporter basic functions. In terms of tissue distribution, specifically expressed in kidney and to a lower extent in liver, lung, spleen, brain, skeletal muscle and heart. In kidney, expressed in proximal tubules at the corticomedullary junction. Isoform 2 is specifically expressed in kidney. Isoform 1 is expressed in kidney and pancreas while isoform 3 is specifically expressed in brain (at protein level). In brain, isoform 1 is expressed in astrocytes while isoform 3 is expressed in neurons (at protein level). In the eye, isoform 1 is expressed in cornea, conjunctiva, lens epithelium, ciliary bodies and retina while isoform 2 is detected only in the conjunctiva.

The protein localises to the basolateral cell membrane. It localises to the cell membrane. It carries out the reaction 2 hydrogencarbonate(out) + Na(+)(out) = 2 hydrogencarbonate(in) + Na(+)(in). The enzyme catalyses 3 hydrogencarbonate(out) + Na(+)(out) = 3 hydrogencarbonate(in) + Na(+)(in). With respect to regulation, inhibited by 4,4'-diisothiocyanatostilbene-2,2'-disulfonic acid (DIDS). In terms of biological role, electrogenic sodium/bicarbonate cotransporter with a Na(+):HCO3(-) stoichiometry varying from 1:2 to 1:3. May regulate bicarbonate influx/efflux at the basolateral membrane of cells and regulate intracellular pH. The polypeptide is Electrogenic sodium bicarbonate cotransporter 1 (Slc4a4) (Rattus norvegicus (Rat)).